Consider the following 552-residue polypeptide: Chaperonin GroEL (552 aa).

ATP contacts are provided by residues 30–33, lysine 51, 87–91, glycine 415, and aspartate 496; these read TLGP and DGTTT.

It belongs to the chaperonin (HSP60) family. Forms a cylinder of 14 subunits composed of two heptameric rings stacked back-to-back. Interacts with the co-chaperonin GroES.

It is found in the cytoplasm. It catalyses the reaction ATP + H2O + a folded polypeptide = ADP + phosphate + an unfolded polypeptide.. Functionally, together with its co-chaperonin GroES, plays an essential role in assisting protein folding. The GroEL-GroES system forms a nano-cage that allows encapsulation of the non-native substrate proteins and provides a physical environment optimized to promote and accelerate protein folding. The chain is Chaperonin GroEL from Paramagnetospirillum magneticum (strain ATCC 700264 / AMB-1) (Magnetospirillum magneticum).